We begin with the raw amino-acid sequence, 341 residues long: S-adenosylmethionine:tRNA ribosyltransferase-isomerase (341 aa).

This sequence belongs to the QueA family. In terms of assembly, monomer.

It localises to the cytoplasm. It catalyses the reaction 7-aminomethyl-7-carbaguanosine(34) in tRNA + S-adenosyl-L-methionine = epoxyqueuosine(34) in tRNA + adenine + L-methionine + 2 H(+). Its pathway is tRNA modification; tRNA-queuosine biosynthesis. Its function is as follows. Transfers and isomerizes the ribose moiety from AdoMet to the 7-aminomethyl group of 7-deazaguanine (preQ1-tRNA) to give epoxyqueuosine (oQ-tRNA). The polypeptide is S-adenosylmethionine:tRNA ribosyltransferase-isomerase (Clostridium botulinum (strain Eklund 17B / Type B)).